The primary structure comprises 161 residues: Epididymal protein 13 (161 aa).

Residues 1-23 (MHRSEPFLKMSLLILLFLGLAEA) form the signal peptide. N-linked (GlcNAc...) asparagine glycosylation occurs at Asn-56.

Its subcellular location is the secreted. This Homo sapiens (Human) protein is Epididymal protein 13.